Consider the following 147-residue polypeptide: UPF0306 protein YhbP (147 aa).

The protein belongs to the UPF0306 family.

The polypeptide is UPF0306 protein YhbP (Escherichia coli O6:K15:H31 (strain 536 / UPEC)).